A 233-amino-acid chain; its full sequence is Orotate phosphoribosyltransferase (233 aa).

A 5-phospho-alpha-D-ribose 1-diphosphate-binding site is contributed by K29. F37 to F38 contacts orotate. 5-phospho-alpha-D-ribose 1-diphosphate-binding positions include Y79 to K80, R109, K110, K113, H115, and D135 to A143. Orotate is bound by residues T139 and R167.

It belongs to the purine/pyrimidine phosphoribosyltransferase family. PyrE subfamily. In terms of assembly, homodimer.

It catalyses the reaction orotidine 5'-phosphate + diphosphate = orotate + 5-phospho-alpha-D-ribose 1-diphosphate. Its pathway is pyrimidine metabolism; UMP biosynthesis via de novo pathway; UMP from orotate: step 1/2. Catalyzes the transfer of a ribosyl phosphate group from 5-phosphoribose 1-diphosphate to orotate, leading to the formation of orotidine monophosphate (OMP). The protein is Orotate phosphoribosyltransferase (ura-5) of Neurospora crassa (strain ATCC 24698 / 74-OR23-1A / CBS 708.71 / DSM 1257 / FGSC 987).